Here is a 249-residue protein sequence, read N- to C-terminus: Serine acetyltransferase (249 aa).

This sequence belongs to the transferase hexapeptide repeat family.

The protein localises to the cytoplasm. The catalysed reaction is L-serine + acetyl-CoA = O-acetyl-L-serine + CoA. Its pathway is amino-acid biosynthesis; L-cysteine biosynthesis; L-cysteine from L-serine: step 1/2. The polypeptide is Serine acetyltransferase (cysE) (Synechocystis sp. (strain ATCC 27184 / PCC 6803 / Kazusa)).